The primary structure comprises 467 residues: Tubulin beta-1 chain (467 aa).

GTP is bound by residues glutamine 11, glutamate 69, serine 138, glycine 142, threonine 143, glycine 144, asparagine 204, and asparagine 226. Glutamate 69 is a binding site for Mg(2+). Residues 429–444 show a composition bias toward acidic residues; sequence TIDDEEGGEEEEGGAE. Residues 429–448 form a disordered region; that stretch reads TIDDEEGGEEEEGGAEEEAR.

The protein belongs to the tubulin family. Dimer of alpha and beta chains. A typical microtubule is a hollow water-filled tube with an outer diameter of 25 nm and an inner diameter of 15 nM. Alpha-beta heterodimers associate head-to-tail to form protofilaments running lengthwise along the microtubule wall with the beta-tubulin subunit facing the microtubule plus end conferring a structural polarity. Microtubules usually have 13 protofilaments but different protofilament numbers can be found in some organisms and specialized cells. Requires Mg(2+) as cofactor.

It is found in the cytoplasm. Its subcellular location is the cytoskeleton. The protein localises to the spindle. It localises to the nucleus. Its function is as follows. Tubulin is the major constituent of microtubules, a cylinder consisting of laterally associated linear protofilaments composed of alpha- and beta-tubulin heterodimers. Microtubules grow by the addition of GTP-tubulin dimers to the microtubule end, where a stabilizing cap forms. Below the cap, tubulin dimers are in GDP-bound state, owing to GTPase activity of alpha-tubulin. In Physarum polycephalum (Slime mold), this protein is Tubulin beta-1 chain (BETA).